A 347-amino-acid polypeptide reads, in one-letter code: UDP-N-acetylenolpyruvoylglucosamine reductase (347 aa).

One can recognise an FAD-binding PCMH-type domain in the interval 16–187; sequence AIEQCSHYLV…IAVGLKLPKT (172 aa). Residue Arg163 is part of the active site. Ser233 serves as the catalytic Proton donor. Glu328 is an active-site residue.

The protein belongs to the MurB family. FAD is required as a cofactor.

It is found in the cytoplasm. It carries out the reaction UDP-N-acetyl-alpha-D-muramate + NADP(+) = UDP-N-acetyl-3-O-(1-carboxyvinyl)-alpha-D-glucosamine + NADPH + H(+). The protein operates within cell wall biogenesis; peptidoglycan biosynthesis. Cell wall formation. The polypeptide is UDP-N-acetylenolpyruvoylglucosamine reductase (Vibrio vulnificus (strain YJ016)).